A 258-amino-acid chain; its full sequence is MLIVLSPAKTLDYDTPAHTEISSKPDFIKQSAELIKILRQSSPAQIASLMRISDPLASLNANRFAAWSPKFTQKNSKQAMLAFNGDVYEGLDAASMDAKQLAYAQSHIRILSGLYGVLRPLDLMQPYRLEMGTRLANAAGKDLYAFWGNTVTETLNQRIAEQQSEALVNLASEEYFKVVKPALLKAPVITPVFQDWKNGQYKIISFYAKRARGLMARYAATKGIKRPEELKSFDVDGYEFDAAASNEKTWMFRRKVGI.

It belongs to the UPF0246 family.

The sequence is that of UPF0246 protein mma_1385 from Janthinobacterium sp. (strain Marseille) (Minibacterium massiliensis).